The primary structure comprises 597 residues: Siderophore iron transporter 2 (597 aa).

Phosphoserine is present on S46. 14 consecutive transmembrane segments (helical) span residues 65–85 (IIVAYLGLYLLSFASSLEQQT), 97–117 (FSAHSNLATINLVGNILLAVV), 131–151 (SESLSLALGMTVLGYLSLAFS), 159–179 (VAYILYICGQTGLGLLSQLII), 190–210 (ILSAIPELPYLATVWIGPVLA), 225–245 (YGIWAFILPTVSLPLLASLFL), 281–301 (LDGLGIVLFVSGFTLLLLPFS), 312–332 (TILTLFTITLSIALLVTLCFY), 357–377 (VLIFTYFMSYYIFSNFLTSFL), 390–410 (LTLNVFVFSMTTTAILSGFLM), 419–439 (LLMISVPMYVLGILGIILFGI), 448–468 (LVLVLILAGMGGGLLTLSAQI), 485–505 (LYLTFSSVGGAFGSAIAGGVW), and 558–578 (KDLFHISLVASLFMFAGLVII).

The protein belongs to the major facilitator superfamily.

It localises to the membrane. Its function is as follows. Involved in the transport of siderophore iron and so has a role in iron homeostasis. The polypeptide is Siderophore iron transporter 2 (str2) (Schizosaccharomyces pombe (strain 972 / ATCC 24843) (Fission yeast)).